The sequence spans 322 residues: DNA repair and recombination protein RadA (322 aa).

Gly-105–Thr-112 lines the ATP pocket.

This sequence belongs to the eukaryotic RecA-like protein family.

In terms of biological role, involved in DNA repair and in homologous recombination. Binds and assemble on single-stranded DNA to form a nucleoprotein filament. Hydrolyzes ATP in a ssDNA-dependent manner and promotes DNA strand exchange between homologous DNA molecules. This chain is DNA repair and recombination protein RadA, found in Methanococcus maripaludis (strain C7 / ATCC BAA-1331).